A 242-amino-acid chain; its full sequence is NAD-dependent protein deacylase 1 (242 aa).

The Deacetylase sirtuin-type domain maps to 1 to 242 (MDFKILKEKL…FAMKFEEKEG (242 aa)). 21–40 (GAGISKESGIPTFRGEDGLW) is an NAD(+) binding site. Positions 65 and 68 each coordinate substrate. 99 to 102 (QNVD) serves as a coordination point for NAD(+). Histidine 117 serves as the catalytic Proton acceptor. Residues cysteine 125, cysteine 128, cysteine 146, and cysteine 149 each coordinate Zn(2+). NAD(+)-binding positions include 186–188 (GTS) and glutamate 241.

Belongs to the sirtuin family. Class III subfamily. Zn(2+) is required as a cofactor.

The protein localises to the cytoplasm. It catalyses the reaction N(6)-acetyl-L-lysyl-[protein] + NAD(+) + H2O = 2''-O-acetyl-ADP-D-ribose + nicotinamide + L-lysyl-[protein]. The enzyme catalyses N(6)-succinyl-L-lysyl-[protein] + NAD(+) + H2O = 2''-O-succinyl-ADP-D-ribose + nicotinamide + L-lysyl-[protein]. In terms of biological role, NAD-dependent lysine deacetylase and desuccinylase that specifically removes acetyl and succinyl groups on target proteins. Modulates the activities of several proteins which are inactive in their acylated form. The sequence is that of NAD-dependent protein deacylase 1 from Caldanaerobacter subterraneus subsp. tengcongensis (strain DSM 15242 / JCM 11007 / NBRC 100824 / MB4) (Thermoanaerobacter tengcongensis).